A 209-amino-acid polypeptide reads, in one-letter code: 2,3-bisphosphoglycerate-dependent phosphoglycerate mutase (209 aa).

Residues 8–15 (RHGQSEGN), 21–22 (TG), R60, 87–90 (ERDY), K98, 114–115 (RR), and 158–159 (GN) contribute to the substrate site. The active-site Tele-phosphohistidine intermediate is the H9. E87 (proton donor/acceptor) is an active-site residue.

This sequence belongs to the phosphoglycerate mutase family. BPG-dependent PGAM subfamily. As to quaternary structure, homodimer.

It carries out the reaction (2R)-2-phosphoglycerate = (2R)-3-phosphoglycerate. The protein operates within carbohydrate degradation; glycolysis; pyruvate from D-glyceraldehyde 3-phosphate: step 3/5. Its function is as follows. Catalyzes the interconversion of 2-phosphoglycerate and 3-phosphoglycerate. This is 2,3-bisphosphoglycerate-dependent phosphoglycerate mutase from Rhizobium etli (strain ATCC 51251 / DSM 11541 / JCM 21823 / NBRC 15573 / CFN 42).